A 131-amino-acid chain; its full sequence is ATP synthase epsilon chain (131 aa).

The protein belongs to the ATPase epsilon chain family. In terms of assembly, F-type ATPases have 2 components, CF(1) - the catalytic core - and CF(0) - the membrane proton channel. CF(1) has five subunits: alpha(3), beta(3), gamma(1), delta(1), epsilon(1). CF(0) has three main subunits: a, b and c.

Its subcellular location is the cell membrane. Functionally, produces ATP from ADP in the presence of a proton gradient across the membrane. The polypeptide is ATP synthase epsilon chain (Clostridium novyi (strain NT)).